Reading from the N-terminus, the 422-residue chain is ATP-dependent Clp protease ATP-binding subunit ClpX 1 (422 aa).

A ClpX-type ZB domain is found at 4–57 (DRKNRESGKLLYCSFCGKSQHEVRKLIAGPAVFVCDECVELCNDIIREDLQGSE). Positions 16, 19, 38, and 41 each coordinate Zn(2+). 120–127 (PTGSGKTL) is an ATP binding site.

This sequence belongs to the ClpX chaperone family. In terms of assembly, component of the ClpX-ClpP complex. Forms a hexameric ring that, in the presence of ATP, binds to fourteen ClpP subunits assembled into a disk-like structure with a central cavity, resembling the structure of eukaryotic proteasomes.

Its function is as follows. ATP-dependent specificity component of the Clp protease. It directs the protease to specific substrates. Can perform chaperone functions in the absence of ClpP. In Methylococcus capsulatus (strain ATCC 33009 / NCIMB 11132 / Bath), this protein is ATP-dependent Clp protease ATP-binding subunit ClpX 1.